A 354-amino-acid polypeptide reads, in one-letter code: Phenylalanine--tRNA ligase alpha subunit (354 aa).

E279 contacts Mg(2+).

This sequence belongs to the class-II aminoacyl-tRNA synthetase family. Phe-tRNA synthetase alpha subunit type 1 subfamily. Tetramer of two alpha and two beta subunits. Requires Mg(2+) as cofactor.

The protein resides in the cytoplasm. It carries out the reaction tRNA(Phe) + L-phenylalanine + ATP = L-phenylalanyl-tRNA(Phe) + AMP + diphosphate + H(+). The sequence is that of Phenylalanine--tRNA ligase alpha subunit from Cupriavidus pinatubonensis (strain JMP 134 / LMG 1197) (Cupriavidus necator (strain JMP 134)).